The sequence spans 362 residues: S-adenosylmethionine:tRNA ribosyltransferase-isomerase (362 aa).

The protein belongs to the QueA family. As to quaternary structure, monomer.

The protein resides in the cytoplasm. It catalyses the reaction 7-aminomethyl-7-carbaguanosine(34) in tRNA + S-adenosyl-L-methionine = epoxyqueuosine(34) in tRNA + adenine + L-methionine + 2 H(+). It functions in the pathway tRNA modification; tRNA-queuosine biosynthesis. Transfers and isomerizes the ribose moiety from AdoMet to the 7-aminomethyl group of 7-deazaguanine (preQ1-tRNA) to give epoxyqueuosine (oQ-tRNA). This is S-adenosylmethionine:tRNA ribosyltransferase-isomerase from Yersinia enterocolitica serotype O:8 / biotype 1B (strain NCTC 13174 / 8081).